The chain runs to 443 residues: Probable lipase C16A3.12c (443 aa).

At 1 to 16 (MSGFNKNQIYWGDYVG) the chain is on the cytoplasmic side. A helical; Signal-anchor for type II membrane protein transmembrane segment spans residues 17–37 (VIAAFVGVYTELVARIFIYMI). Over 38-443 (PERVREWFRV…KHFVKQNGFH (406 aa)) the chain is Lumenal. Residues 116–410 (VVYCHHGLMT…HYEHLDFLWG (295 aa)) form the AB hydrolase-1 domain. N-linked (GlcNAc...) asparagine glycans are attached at residues asparagine 134 and asparagine 177. Serine 210 serves as the catalytic Nucleophile. Residues asparagine 304 and asparagine 335 are each glycosylated (N-linked (GlcNAc...) asparagine). Catalysis depends on charge relay system residues aspartate 378 and histidine 404.

It belongs to the AB hydrolase superfamily. Lipase family.

It localises to the cytoplasm. Its subcellular location is the vacuole. It is found in the membrane. Probable lipase. The polypeptide is Probable lipase C16A3.12c (Schizosaccharomyces pombe (strain 972 / ATCC 24843) (Fission yeast)).